Consider the following 141-residue polypeptide: Large ribosomal subunit protein uL11 (141 aa).

Belongs to the universal ribosomal protein uL11 family. Part of the ribosomal stalk of the 50S ribosomal subunit. Interacts with L10 and the large rRNA to form the base of the stalk. L10 forms an elongated spine to which L12 dimers bind in a sequential fashion forming a multimeric L10(L12)X complex. One or more lysine residues are methylated.

Forms part of the ribosomal stalk which helps the ribosome interact with GTP-bound translation factors. The sequence is that of Large ribosomal subunit protein uL11 from Alkaliphilus metalliredigens (strain QYMF).